The sequence spans 624 residues: Glucoamylase (624 aa).

An N-terminal signal peptide occupies residues 1 to 18 (MRQFLALAAAASIAVADS). One can recognise a CBM21 domain in the interval 26-132 (NSPPDDKAVA…NSQQLNVQVE (107 aa)). 7 N-linked (GlcNAc...) asparagine glycosylation sites follow: N54, N70, N98, N111, N168, N267, and N333. D340 (proton acceptor) is an active-site residue. E343 (proton donor) is an active-site residue. N-linked (GlcNAc...) asparagine glycosylation is found at N460 and N582.

It belongs to the glycosyl hydrolase 15 family.

It carries out the reaction Hydrolysis of terminal (1-&gt;4)-linked alpha-D-glucose residues successively from non-reducing ends of the chains with release of beta-D-glucose.. The protein is Glucoamylase (GAA) of Blastobotrys adeninivorans (Yeast).